Consider the following 269-residue polypeptide: ATP synthase subunit gamma, mitochondrial (269 aa).

As to quaternary structure, F-type ATP synthases have 2 components, the catalytic core F(1) and the membrane-embedded component F(0), linked together by a central stalk and a peripheral stalk. The central stalk, also called rotor shaft, is often seen as part of F(1). The peripheral stalk is seen as part of F(0). F(0) contains the membrane channel next to the rotor. F-type ATP synthases form dimers but each monomer functions independently in ATP generation. The dimer consists of 18 different polypeptides: ATP1 (subunit alpha, part of F(1), 3 molecules per monomer), ATP2 (subunit beta, part of F(1), 3 molecules per monomer), ATP3 (subunit gamma, part of the central stalk), ATP4 (subunit b, part of the peripheral stalk), ATP5/OSCP (subunit 5/OSCP, part of the peripheral stalk), ATP6 (subunit a, part of the peripheral stalk), ATP7 (subunit d, part of the peripheral stalk), ATP8 (subunit 8, part of the peripheral stalk), OLI1 (subunit c, part of the rotor, 10 molecules per monomer), ATP14 (subunit h, part of the peripheral stalk), ATP15 (subunit epsilon, part of the central stalk), ATP16 (subunit delta, part of the central stalk), ATP17 (subunit f, part of the peripheral stalk), ATP18 (subunit i/j, part of the peripheral stalk). Dimer-specific subunits are ATP19 (subunit k, at interface between monomers), ATP20 (subunit g, at interface between monomers), TIM11 (subunit e, at interface between monomers). Also contains subunit L.

The protein resides in the mitochondrion inner membrane. Mitochondrial membrane ATP synthase (F(1)F(0) ATP synthase or Complex V) produces ATP from ADP in the presence of a proton gradient across the membrane which is generated by electron transport complexes of the respiratory chain. F-type ATP synthases consist of two structural domains, F(1) - containing the extramembraneous catalytic core, and F(0) - containing the membrane proton channel, linked together by a central stalk and a peripheral stalk. During catalysis, ATP synthesis in the catalytic domain of F(1) is coupled via a rotary mechanism of the central stalk subunits to proton translocation. Part of the complex F(1) domain and the central stalk which is part of the complex rotary element. The gamma/ATP3 subunit protrudes into the catalytic domain formed of alpha/ATP1(3)beta/ATP2(3). Rotation of the central stalk against the surrounding alpha/ATP1(3)beta/ATP2(3) subunits leads to hydrolysis of ATP in three separate catalytic sites on the beta/ATP2 subunits. This Pichia angusta (Yeast) protein is ATP synthase subunit gamma, mitochondrial.